We begin with the raw amino-acid sequence, 175 residues long: MMTYIVFILSVIFVIGFVGFSSKPSPIYGGLVLIVSGGVGCGIIMNFGGSFLGLMVFLIYLGGMLVVFGYTTAMATEQYPEVWVSNATVMGVFLLGLLMEVMLVLYVLKSEEVGVVFKFSSVGHWAIYDIGNSGVFSEEIMGVAALYSYGAWVVVVTGWSLLVGVLVILEVTRGD.

5 helical membrane passes run 1 to 21, 25 to 45, 47 to 67, 88 to 108, and 149 to 169; these read MMTYIVFILSVIFVIGFVGFS, SPIYGGLVLIVSGGVGCGIIM, FGGSFLGLMVFLIYLGGMLVV, TVMGVFLLGLLMEVMLVLYVL, and YGAWVVVVTGWSLLVGVLVIL.

The protein belongs to the complex I subunit 6 family. In terms of assembly, core subunit of respiratory chain NADH dehydrogenase (Complex I) which is composed of 45 different subunits.

The protein resides in the mitochondrion inner membrane. The enzyme catalyses a ubiquinone + NADH + 5 H(+)(in) = a ubiquinol + NAD(+) + 4 H(+)(out). Core subunit of the mitochondrial membrane respiratory chain NADH dehydrogenase (Complex I) which catalyzes electron transfer from NADH through the respiratory chain, using ubiquinone as an electron acceptor. Essential for the catalytic activity and assembly of complex I. The sequence is that of NADH-ubiquinone oxidoreductase chain 6 (MT-ND6) from Equus asinus (Donkey).